Reading from the N-terminus, the 110-residue chain is Large ribosomal subunit protein uL22 (110 aa).

This sequence belongs to the universal ribosomal protein uL22 family. Part of the 50S ribosomal subunit.

This protein binds specifically to 23S rRNA; its binding is stimulated by other ribosomal proteins, e.g. L4, L17, and L20. It is important during the early stages of 50S assembly. It makes multiple contacts with different domains of the 23S rRNA in the assembled 50S subunit and ribosome. Its function is as follows. The globular domain of the protein is located near the polypeptide exit tunnel on the outside of the subunit, while an extended beta-hairpin is found that lines the wall of the exit tunnel in the center of the 70S ribosome. The sequence is that of Large ribosomal subunit protein uL22 from Leptospira borgpetersenii serovar Hardjo-bovis (strain JB197).